The chain runs to 337 residues: Holliday junction branch migration complex subunit RuvB (337 aa).

Positions 4–184 (QDRIISAELK…FGIVQRLEFY (181 aa)) are large ATPase domain (RuvB-L). Residues isoleucine 23, arginine 24, glycine 65, lysine 68, threonine 69, threonine 70, 131–133 (EDY), arginine 174, tyrosine 184, and arginine 221 each bind ATP. Residue threonine 69 coordinates Mg(2+). The small ATPAse domain (RuvB-S) stretch occupies residues 185–255 (DVESLTTIVA…VAQRALDMLS (71 aa)). The head domain (RuvB-H) stretch occupies residues 258-337 (SQGFDHLDRR…FNYQLPSDFK (80 aa)). Positions 313 and 318 each coordinate DNA.

It belongs to the RuvB family. Homohexamer. Forms an RuvA(8)-RuvB(12)-Holliday junction (HJ) complex. HJ DNA is sandwiched between 2 RuvA tetramers; dsDNA enters through RuvA and exits via RuvB. An RuvB hexamer assembles on each DNA strand where it exits the tetramer. Each RuvB hexamer is contacted by two RuvA subunits (via domain III) on 2 adjacent RuvB subunits; this complex drives branch migration. In the full resolvosome a probable DNA-RuvA(4)-RuvB(12)-RuvC(2) complex forms which resolves the HJ.

Its subcellular location is the cytoplasm. It catalyses the reaction ATP + H2O = ADP + phosphate + H(+). In terms of biological role, the RuvA-RuvB-RuvC complex processes Holliday junction (HJ) DNA during genetic recombination and DNA repair, while the RuvA-RuvB complex plays an important role in the rescue of blocked DNA replication forks via replication fork reversal (RFR). RuvA specifically binds to HJ cruciform DNA, conferring on it an open structure. The RuvB hexamer acts as an ATP-dependent pump, pulling dsDNA into and through the RuvAB complex. RuvB forms 2 homohexamers on either side of HJ DNA bound by 1 or 2 RuvA tetramers; 4 subunits per hexamer contact DNA at a time. Coordinated motions by a converter formed by DNA-disengaged RuvB subunits stimulates ATP hydrolysis and nucleotide exchange. Immobilization of the converter enables RuvB to convert the ATP-contained energy into a lever motion, pulling 2 nucleotides of DNA out of the RuvA tetramer per ATP hydrolyzed, thus driving DNA branch migration. The RuvB motors rotate together with the DNA substrate, which together with the progressing nucleotide cycle form the mechanistic basis for DNA recombination by continuous HJ branch migration. Branch migration allows RuvC to scan DNA until it finds its consensus sequence, where it cleaves and resolves cruciform DNA. This is Holliday junction branch migration complex subunit RuvB from Marinomonas sp. (strain MWYL1).